Here is a 203-residue protein sequence, read N- to C-terminus: Tic20 family protein Ycf60 (203 aa).

The next 5 membrane-spanning stretches (helical) occupy residues 2-22, 51-71, 84-104, 131-151, and 153-173; these read IRLF…RLAI, IIPY…YVLP, ILLP…VTFF, ILLF…PIEF, and ISFI…STIT.

It belongs to the Tic20 family.

It is found in the plastid. The protein localises to the chloroplast membrane. In Porphyra purpurea (Red seaweed), this protein is Tic20 family protein Ycf60 (ycf60).